The following is an 86-amino-acid chain: uncharacterized protein (86 aa).

This sequence to C.jejuni CJ0253.

This is an uncharacterized protein from Helicobacter pylori (strain ATCC 700392 / 26695) (Campylobacter pylori).